The chain runs to 369 residues: MASWPELIGALLARESLDSARTAWAMDQIMAGAATPAQIAGFAVALRAKGETPAEIGGLIAAMRAHAAPLRIPDEIRARAVDTCGTGGDRSNTVNLSTMAALVVAGAGVPVIKHGNRAASSACGSADLLAELGVAIDLPPAGVEACLRAAGIAFCFARIFHPAMRHVGGPRAEIGVPTAFNILGPLTNPAEPGAQAVGVADARLAPVVAQVLADRGTRALVFRGDDGLDELTPTTTSTIWVIPGGQPSAAGEAAGQTAAPPRREQFDPRDVGIHVPDIAVLRGADAPHNAAVTRALLAGEPGPVRDTVLLAAAASLVAAAGPTDAAITEQIAAALPRAAHAIDSGAAAAVLDRWTDASQAAAAAAAIAR.

Residues Gly-85, 88–89 (GD), Thr-93, 95–98 (NLST), 113–121 (KHGNRAASS), and Ser-125 each bind 5-phospho-alpha-D-ribose 1-diphosphate. Residue Gly-85 coordinates anthranilate. Position 97 (Ser-97) interacts with Mg(2+). Asn-116 provides a ligand contact to anthranilate. Arg-171 contacts anthranilate. Residues Asp-229 and Glu-230 each coordinate Mg(2+).

The protein belongs to the anthranilate phosphoribosyltransferase family. In terms of assembly, homodimer. Mg(2+) is required as a cofactor.

The catalysed reaction is N-(5-phospho-beta-D-ribosyl)anthranilate + diphosphate = 5-phospho-alpha-D-ribose 1-diphosphate + anthranilate. It participates in amino-acid biosynthesis; L-tryptophan biosynthesis; L-tryptophan from chorismate: step 2/5. Catalyzes the transfer of the phosphoribosyl group of 5-phosphorylribose-1-pyrophosphate (PRPP) to anthranilate to yield N-(5'-phosphoribosyl)-anthranilate (PRA). In Frankia alni (strain DSM 45986 / CECT 9034 / ACN14a), this protein is Anthranilate phosphoribosyltransferase.